The sequence spans 328 residues: dITP/XTP pyrophosphatase (328 aa).

Residues 1 to 129 (MSEKIYEYKD…ATSEQGFGDT (129 aa)) form a unknown region. Positions 130–324 (ILIATRNEGK…KLMEVFPAWQ (195 aa)) are NTP pyrophosphatase. 134 to 139 (TRNEGK) is a binding site for substrate. Catalysis depends on Asp196, which acts as the Proton acceptor. A Mg(2+)-binding site is contributed by Asp196. Substrate is bound by residues Ser197, 280–283 (FGYD), Lys303, and 308–309 (HR).

The protein belongs to the HAM1 NTPase family. Homodimer. The cofactor is Mg(2+).

The catalysed reaction is XTP + H2O = XMP + diphosphate + H(+). The enzyme catalyses dITP + H2O = dIMP + diphosphate + H(+). It carries out the reaction ITP + H2O = IMP + diphosphate + H(+). Functionally, pyrophosphatase that catalyzes the hydrolysis of nucleoside triphosphates to their monophosphate derivatives, with a high preference for the non-canonical purine nucleotides XTP (xanthosine triphosphate), dITP (deoxyinosine triphosphate) and ITP. Seems to function as a house-cleaning enzyme that removes non-canonical purine nucleotides from the nucleotide pool, thus preventing their incorporation into DNA/RNA and avoiding chromosomal lesions. The chain is dITP/XTP pyrophosphatase from Streptococcus pyogenes serotype M6 (strain ATCC BAA-946 / MGAS10394).